Consider the following 62-residue polypeptide: Large ribosomal subunit protein bL28 (62 aa).

This sequence belongs to the bacterial ribosomal protein bL28 family.

This is Large ribosomal subunit protein bL28 from Phytoplasma mali (strain AT).